A 109-amino-acid chain; its full sequence is Large ribosomal subunit protein uL22 (109 aa).

It belongs to the universal ribosomal protein uL22 family. Part of the 50S ribosomal subunit.

This protein binds specifically to 23S rRNA; its binding is stimulated by other ribosomal proteins, e.g. L4, L17, and L20. It is important during the early stages of 50S assembly. It makes multiple contacts with different domains of the 23S rRNA in the assembled 50S subunit and ribosome. In terms of biological role, the globular domain of the protein is located near the polypeptide exit tunnel on the outside of the subunit, while an extended beta-hairpin is found that lines the wall of the exit tunnel in the center of the 70S ribosome. The sequence is that of Large ribosomal subunit protein uL22 from Leptothrix cholodnii (strain ATCC 51168 / LMG 8142 / SP-6) (Leptothrix discophora (strain SP-6)).